The chain runs to 160 residues: Small ribosomal subunit protein uS9 (160 aa).

This sequence belongs to the universal ribosomal protein uS9 family.

This is Small ribosomal subunit protein uS9 from Mesorhizobium japonicum (strain LMG 29417 / CECT 9101 / MAFF 303099) (Mesorhizobium loti (strain MAFF 303099)).